The following is a 249-amino-acid chain: Aspartate/glutamate leucyltransferase (249 aa).

Belongs to the R-transferase family. Bpt subfamily.

The protein resides in the cytoplasm. The enzyme catalyses N-terminal L-glutamyl-[protein] + L-leucyl-tRNA(Leu) = N-terminal L-leucyl-L-glutamyl-[protein] + tRNA(Leu) + H(+). It catalyses the reaction N-terminal L-aspartyl-[protein] + L-leucyl-tRNA(Leu) = N-terminal L-leucyl-L-aspartyl-[protein] + tRNA(Leu) + H(+). Functionally, functions in the N-end rule pathway of protein degradation where it conjugates Leu from its aminoacyl-tRNA to the N-termini of proteins containing an N-terminal aspartate or glutamate. This Brucella canis (strain ATCC 23365 / NCTC 10854 / RM-666) protein is Aspartate/glutamate leucyltransferase.